The chain runs to 378 residues: Sterol 24-C-methyltransferase erg6 (378 aa).

It belongs to the class I-like SAM-binding methyltransferase superfamily. Erg6/SMT family.

Its subcellular location is the nucleus. The protein resides in the endoplasmic reticulum. It catalyses the reaction zymosterol + S-adenosyl-L-methionine = fecosterol + S-adenosyl-L-homocysteine + H(+). The catalysed reaction is lanosterol + S-adenosyl-L-methionine = eburicol + S-adenosyl-L-homocysteine + H(+). The protein operates within steroid metabolism; ergosterol biosynthesis. Its function is as follows. Sterol 24-C-methyltransferase; part of the third module of ergosterol biosynthesis pathway that includes by the late steps of the pathway. Erg6 catalyzes the methyl transfer from S-adenosyl-methionine to the C-24 of zymosterol to form fecosterol. The third module or late pathway involves the ergosterol synthesis itself through consecutive reactions that mainly occur in the endoplasmic reticulum (ER) membrane. Firstly, the squalene synthase erg9 catalyzes the condensation of 2 farnesyl pyrophosphate moieties to form squalene, which is the precursor of all steroids. Secondly, squalene is converted into lanosterol by the consecutive action of the squalene epoxidase erg1 and the lanosterol synthase erg7. The lanosterol 14-alpha-demethylase erg11/cyp1 catalyzes C14-demethylation of lanosterol to produce 4,4'-dimethyl cholesta-8,14,24-triene-3-beta-ol. In the next steps, a complex process involving various demethylation, reduction and desaturation reactions catalyzed by the C-14 reductase erg24 and the C-4 demethylation complex erg25-erg26-erg27 leads to the production of zymosterol. Erg28 likely functions in the C-4 demethylation complex reaction by tethering erg26 and Erg27 to the endoplasmic reticulum or to facilitate interaction between these proteins. Then, the sterol 24-C-methyltransferase erg6 catalyzes the methyl transfer from S-adenosyl-methionine to the C-24 of zymosterol to form fecosterol. The C-8 sterol isomerase erg2 catalyzes the reaction which results in unsaturation at C-7 in the B ring of sterols and thus converts fecosterol to episterol. The sterol-C5-desaturases erg31 and erg32 then catalyze the introduction of a C-5 double bond in the B ring to produce 5-dehydroepisterol. The C-22 sterol desaturase erg5 further converts 5-dehydroepisterol into ergosta-5,7,22,24(28)-tetraen-3beta-ol by forming the C-22(23) double bond in the sterol side chain. Finally, ergosta-5,7,22,24(28)-tetraen-3beta-ol is substrate of the C-24(28) sterol reductase erg4 to produce ergosterol. In the genus Schizosaccharomyces, a second route exists between lanosterol and fecosterol, via the methylation of lanosterol to eburicol by erg6, followed by C14-demethylation by erg11/cyp1 and C4-demethylation by the demethylation complex erg25-erg26-erg27. The protein is Sterol 24-C-methyltransferase erg6 of Schizosaccharomyces pombe (strain 972 / ATCC 24843) (Fission yeast).